Reading from the N-terminus, the 645-residue chain is 1-deoxy-D-xylulose-5-phosphate synthase 1 (645 aa).

Residues histidine 79 and 120–122 (GHS) each bind thiamine diphosphate. Residue aspartate 151 participates in Mg(2+) binding. Thiamine diphosphate-binding positions include 152–153 (GS), asparagine 180, tyrosine 291, and glutamate 373. A Mg(2+)-binding site is contributed by asparagine 180.

The protein belongs to the transketolase family. DXPS subfamily. As to quaternary structure, homodimer. Requires Mg(2+) as cofactor. Thiamine diphosphate is required as a cofactor.

The catalysed reaction is D-glyceraldehyde 3-phosphate + pyruvate + H(+) = 1-deoxy-D-xylulose 5-phosphate + CO2. Its pathway is metabolic intermediate biosynthesis; 1-deoxy-D-xylulose 5-phosphate biosynthesis; 1-deoxy-D-xylulose 5-phosphate from D-glyceraldehyde 3-phosphate and pyruvate: step 1/1. In terms of biological role, catalyzes the acyloin condensation reaction between C atoms 2 and 3 of pyruvate and glyceraldehyde 3-phosphate to yield 1-deoxy-D-xylulose-5-phosphate (DXP). In Rhodospirillum rubrum (strain ATCC 11170 / ATH 1.1.1 / DSM 467 / LMG 4362 / NCIMB 8255 / S1), this protein is 1-deoxy-D-xylulose-5-phosphate synthase 1.